Consider the following 365-residue polypeptide: MDFLNSSDQNLTSEELLNRMPSKILVSLTLSGLALMTTTINSLVIAAIIVTRKLHHPANYLICSLAVTDFLVAVLVMPFSIVYIVRESWIMGQVVCDIWLSVDITCCTCSILHLSAIALDRYRAITDAVEYARKRTPKHAGIMITIVWIISVFISMPPLFWRHQGTSRDDECIIKHDHIVSTIYSTFGAFYIPLALILILYYKIYRAAKTLYHKRQASRIAKEEVNGQVLLESGEKSTKSVSTSYVLEKSLSDPSTDFDKIHSTVRSLRSEFKHEKSWRRQKISGTRERKAATTLGLILGAFVICWLPFFVKELVVNVCDKCKISEEMSNFLAWLGYLNSLINPLIYTIFNEDFKKAFQKLVRCR.

Residues 1–24 (MDFLNSSDQNLTSEELLNRMPSKI) are Extracellular-facing. N-linked (GlcNAc...) asparagine glycosylation is found at N5 and N10. Residues 25 to 49 (LVSLTLSGLALMTTTINSLVIAAII) form a helical membrane-spanning segment. Over 50–59 (VTRKLHHPAN) the chain is Cytoplasmic. Residues 60 to 81 (YLICSLAVTDFLVAVLVMPFSI) form a helical membrane-spanning segment. Topologically, residues 82-96 (VYIVRESWIMGQVVC) are extracellular. A disulfide bridge links C96 with C172. A helical membrane pass occupies residues 97 to 119 (DIWLSVDITCCTCSILHLSAIAL). D103 and C107 together coordinate serotonin. Residues 120–122 (DRY) carry the DRY motif; important for ligand-induced conformation changes motif. At 120 to 139 (DRYRAITDAVEYARKRTPKH) the chain is on the cytoplasmic side. The helical transmembrane segment at 140–159 (AGIMITIVWIISVFISMPPL) threads the bilayer. The Extracellular segment spans residues 160–178 (FWRHQGTSRDDECIIKHDH). Residues 179–202 (IVSTIYSTFGAFYIPLALILILYY) traverse the membrane as a helical segment. Over 203 to 291 (KIYRAAKTLY…KISGTRERKA (89 aa)) the chain is Cytoplasmic. The helical transmembrane segment at 292–315 (ATTLGLILGAFVICWLPFFVKELV) threads the bilayer. At 316-327 (VNVCDKCKISEE) the chain is on the extracellular side. Residues 328-350 (MSNFLAWLGYLNSLINPLIYTIF) traverse the membrane as a helical segment. Positions 343 to 347 (NPLIY) match the NPxxY motif; important for ligand-induced conformation changes and signaling motif. Residues 351–365 (NEDFKKAFQKLVRCR) lie on the Cytoplasmic side of the membrane.

This sequence belongs to the G-protein coupled receptor 1 family.

The protein resides in the cell membrane. In terms of biological role, G-protein coupled receptor for 5-hydroxytryptamine (serotonin). Also functions as a receptor for various alkaloids and psychoactive substances. Ligand binding causes a conformation change that triggers signaling via guanine nucleotide-binding proteins (G proteins) and modulates the activity of downstream effectors, such as adenylate cyclase. HTR1F is coupled to G(i)/G(o) G alpha proteins and mediates inhibitory neurotransmission by inhibiting adenylate cyclase activity. This Pan troglodytes (Chimpanzee) protein is 5-hydroxytryptamine receptor 1F (HTR1F).